The primary structure comprises 426 residues: D-tagatose-1,6-bisphosphate aldolase subunit KbaZ (426 aa).

It belongs to the GatZ/KbaZ family. KbaZ subfamily. As to quaternary structure, forms a complex with KbaY.

Its pathway is carbohydrate metabolism; D-tagatose 6-phosphate degradation; D-glyceraldehyde 3-phosphate and glycerone phosphate from D-tagatose 6-phosphate: step 2/2. In terms of biological role, component of the tagatose-1,6-bisphosphate aldolase KbaYZ that is required for full activity and stability of the Y subunit. Could have a chaperone-like function for the proper and stable folding of KbaY. When expressed alone, KbaZ does not show any aldolase activity. The sequence is that of D-tagatose-1,6-bisphosphate aldolase subunit KbaZ from Escherichia coli O139:H28 (strain E24377A / ETEC).